The primary structure comprises 195 residues: Nucleoside-triphosphatase THEP1 (195 aa).

Residues 11–18 (GRPGSGKS) and 103–110 (VVVIDEIG) contribute to the ATP site.

It belongs to the THEP1 NTPase family.

It catalyses the reaction a ribonucleoside 5'-triphosphate + H2O = a ribonucleoside 5'-diphosphate + phosphate + H(+). Functionally, has nucleotide phosphatase activity towards ATP, GTP, CTP, TTP and UTP. May hydrolyze nucleoside diphosphates with lower efficiency. The sequence is that of Nucleoside-triphosphatase THEP1 from Korarchaeum cryptofilum (strain OPF8).